The following is a 154-amino-acid chain: Deoxyuridine 5'-triphosphate nucleotidohydrolase (154 aa).

Residues 72 to 74, asparagine 85, 89 to 91, and methionine 99 contribute to the substrate site; these read RSG and LID.

It belongs to the dUTPase family. Mg(2+) is required as a cofactor.

The catalysed reaction is dUTP + H2O = dUMP + diphosphate + H(+). It functions in the pathway pyrimidine metabolism; dUMP biosynthesis; dUMP from dCTP (dUTP route): step 2/2. In terms of biological role, this enzyme is involved in nucleotide metabolism: it produces dUMP, the immediate precursor of thymidine nucleotides and it decreases the intracellular concentration of dUTP so that uracil cannot be incorporated into DNA. The protein is Deoxyuridine 5'-triphosphate nucleotidohydrolase of Psychrobacter arcticus (strain DSM 17307 / VKM B-2377 / 273-4).